The primary structure comprises 380 residues: RNA binding protein fox-1 homolog 2 (380 aa).

Polar residues-rich tracts occupy residues 1–20 (MEKN…TPDT) and 36–56 (NGLS…QSTE). Positions 1–117 (MEKNKMVSQG…TPKRLHVSNI (117 aa)) are disordered. Residues 72-102 (STPATSTANASSTTDGSQTEGQQSQTQNSEN) are compositionally biased toward low complexity. The 77-residue stretch at 110 to 186 (KRLHVSNIPF…RKIEVNNATA (77 aa)) folds into the RRM domain.

It is found in the nucleus. The protein resides in the cytoplasm. In terms of biological role, RNA-binding protein that regulates alternative splicing events by binding to 5'-UGCAUGU-3' elements. Regulates alternative splicing of tissue-specific exons. The protein is RNA binding protein fox-1 homolog 2 (rbfox2) of Xenopus tropicalis (Western clawed frog).